Reading from the N-terminus, the 254-residue chain is Alcohol dehydrogenase 2 (254 aa).

Residue 10-33 (FVAGLGGIGLDTSREIVKSGPKNL) coordinates NAD(+). Residue Ser138 coordinates substrate. Tyr151 serves as the catalytic Proton acceptor.

It belongs to the short-chain dehydrogenases/reductases (SDR) family. In terms of assembly, homodimer.

It carries out the reaction a primary alcohol + NAD(+) = an aldehyde + NADH + H(+). It catalyses the reaction a secondary alcohol + NAD(+) = a ketone + NADH + H(+). This is Alcohol dehydrogenase 2 (Adh2) from Drosophila montana (Fruit fly).